The chain runs to 111 residues: Denmotoxin (111 aa).

An N-terminal signal peptide occupies residues 1 to 19 (MKTLLLAVAVVAFVCLGSA). Positions 20-34 (DQLGLGRQQIDWGQG) are excised as a propeptide. A Pyrrolidone carboxylic acid modification is found at glutamine 35. Cystine bridges form between cysteine 44-cysteine 68, cysteine 47-cysteine 55, cysteine 61-cysteine 87, cysteine 91-cysteine 102, and cysteine 103-cysteine 108.

As to quaternary structure, monomer. As to expression, expressed by the venom gland.

The protein localises to the secreted. Its function is as follows. This bird-specific postsynaptic neurotoxin irreversibly binds and inhibits the chick muscle alpha-1-beta-1-gamma-delta (CHRNA1-CHRNB1-CHRNG-CHNRD) nicotinic acetylcholine receptor (nAChR) 100-fold more compared with the mouse receptor. The weak binding to mouse receptor is reversible. The protein is Denmotoxin of Boiga dendrophila (Mangrove snake).